We begin with the raw amino-acid sequence, 1521 residues long: Protein dispatched homolog 1 (1521 aa).

A compositionally biased stretch (polar residues) spans 1–10 (MAVISGSDSV). Positions 1–55 (MAVISGSDSVLLSNGSISTSTSNPSPLSPSDGDLPAQHLGPRETPRTKASPNGCL) are disordered. The span at 11–35 (LLSNGSISTSTSNPSPLSPSDGDLP) shows a compositional bias: low complexity. N-linked (GlcNAc...) asparagine glycosylation is found at Asn14 and Asn58. Residues 189–209 (VVVLGMCTLLIVVCALVGVLV) traverse the membrane as a helical segment. A glycan (N-linked (GlcNAc...) asparagine) is linked at Asn390. Positions 485-657 (GIEFGIKHSL…VTWLPAVIVL (173 aa)) constitute an SSD domain. 3 helical membrane passes run 499–519 (LLMDTVYPAIAIAIVLLIMCV), 524–544 (MFITLMTMFAIISSLIVSYFL), and 548–568 (VFNFEFFPFMNLTALIILVGI). A glycan (N-linked (GlcNAc...) asparagine) is linked at Asn581. A run of 8 helical transmembrane segments spans residues 603–623 (AALSMFVTSFTTAAAFYANYV), 637–657 (GTAILVNYVLMVTWLPAVIVL), 717–737 (YLWLIWFLALTVGGAYIVCVN), 986–1006 (MGLSVAVAFSVMLLTTWNIII), 1008–1028 (LYAIVSIAGTIFVTVGSLVLL), 1038–1058 (VTISVAVGLSVDFAVHYGVAY), 1081–1101 (IAMAALTTFVAGAMMMPSTVL), and 1109–1129 (FMMLVMCVSWAFATFFFQCLC). 2 stretches are compositionally biased toward polar residues: residues 1355–1364 (QENLGRTSTH) and 1418–1428 (TKSKVSGLPNQ). Residues 1355–1440 (QENLGRTSTH…KEEKQVEPSL (86 aa)) are disordered. The N-linked (GlcNAc...) asparagine glycan is linked to Asn1455.

It belongs to the dispatched family. In terms of assembly, interacts with SHH; via the cholesterol anchor of the dually lipid-modified SHH (ShhNp).

It localises to the membrane. In terms of biological role, functions in hedgehog (Hh) signaling. Regulates the release and extracellular accumulation of cholesterol-modified hedgehog proteins and is hence required for effective production of the Hh signal. Synergizes with SCUBE2 to cause an increase in SHH secretion. In Mus musculus (Mouse), this protein is Protein dispatched homolog 1 (Disp1).